Consider the following 2211-residue polypeptide: Activating signal cointegrator 1 complex subunit 3 (2211 aa).

One can recognise a Helicase ATP-binding 1 domain in the interval 495–678 (ETAYNTNENM…FLHVNPYIGL (184 aa)). 508 to 515 (APTGAGKT) serves as a coordination point for ATP. The short motif at 620 to 623 (DEVH) is the DEVH box element. One can recognise a Helicase C-terminal 1 domain in the interval 717 to 923 (VLKQIMAGHQ…GTVTNVEEAV (207 aa)). One can recognise an SEC63 1 domain in the interval 987–1296 (STDLGRTASH…GAEAVCIINF (310 aa)). A Helicase ATP-binding 2 domain is found at 1345–1520 (HTLYHTDCNV…WLNINQMGLF (176 aa)). 1358 to 1365 (APTGSGKT) lines the ATP pocket. A DEIH box motif is present at residues 1462–1465 (DEIH). The Helicase C-terminal 2 domain occupies 1553-1760 (PAFQAIRSHS…GTITSKQDAM (208 aa)). Positions 1821 to 2184 (PLTYGRIASY…YLGMDQQYDI (364 aa)) constitute an SEC63 2 domain.

It belongs to the helicase family.

The protein resides in the nucleus. It is found in the nucleus speckle. Its subcellular location is the cytoplasm. It localises to the cytosol. The enzyme catalyses Couples ATP hydrolysis with the unwinding of duplex DNA by translocating in the 3'-5' direction.. It catalyses the reaction ATP + H2O = ADP + phosphate + H(+). In terms of biological role, 3'-5' DNA helicase involved in repair of alkylated DNA. Promotes DNA unwinding to generate single-stranded substrate needed for ALKBH3, enabling ALKBH3 to process alkylated N3-methylcytosine (3mC) within double-stranded regions. Also involved in activation of the ribosome quality control (RQC) pathway, a pathway that degrades nascent peptide chains during problematic translation. Drives the splitting of stalled ribosomes. This chain is Activating signal cointegrator 1 complex subunit 3 (ascc3), found in Gallus gallus (Chicken).